The chain runs to 210 residues: Stress-response A/B barrel domain-containing protein DABB1 (210 aa).

Stress-response A/B barrel domains lie at 5–100 and 116–204; these read VEHV…AVDW and IGKI…VVEF.

In terms of assembly, homodimer.

The protein resides in the cytoplasm. It localises to the cytosol. In terms of biological role, involved in defense against fungal pathogens. Possesses antifungal activity against diverse pathogenic fungi. The chain is Stress-response A/B barrel domain-containing protein DABB1 from Arabidopsis thaliana (Mouse-ear cress).